The primary structure comprises 128 residues: L-ectoine synthase (128 aa).

It belongs to the ectoine synthase family.

It catalyses the reaction (2S)-4-acetamido-2-aminobutanoate = L-ectoine + H2O. It participates in amine and polyamine biosynthesis; ectoine biosynthesis; L-ectoine from L-aspartate 4-semialdehyde: step 3/3. In terms of biological role, catalyzes the circularization of gamma-N-acetyl-alpha,gamma-diaminobutyric acid (ADABA) to ectoine (1,4,5,6-tetrahydro-2-methyl-4-pyrimidine carboxylic acid), which is an excellent osmoprotectant. This Virgibacillus pantothenticus protein is L-ectoine synthase.